A 345-amino-acid chain; its full sequence is DNA N(6)-methyladenine demethylase ALKBH1A (345 aa).

Substrate contacts are provided by residues W179 and 186-188; that span reads FDW. Positions 225-345 constitute a Fe2OG dioxygenase domain; it reads RPEGAIVNYF…RININIRQVF (121 aa). 232–234 is a binding site for 2-oxoglutarate; that stretch reads NYF. Residues H243, D245, and H299 each contribute to the Fe cation site. 336 to 342 contributes to the 2-oxoglutarate binding site; sequence RININIR.

This sequence belongs to the alkB family. Requires Fe(2+) as cofactor. Mostly expressed in siliques, to a lower extent in roots, seedlings and rosette leaves, but barely in cauline leaves, stems and flowers.

Its subcellular location is the nucleus. The protein resides in the cytoplasm. It catalyses the reaction an N(6)-methyl-2'-deoxyadenosine in DNA + 2-oxoglutarate + O2 = a 2'-deoxyadenosine in DNA + formaldehyde + succinate + CO2. Functionally, dioxygenase that catalyzes DNA N(6)-methyladenine (6 mA) demethylation to modulate gene expression and regulate seed germination. This chain is DNA N(6)-methyladenine demethylase ALKBH1A, found in Arabidopsis thaliana (Mouse-ear cress).